Reading from the N-terminus, the 500-residue chain is Tektin-like protein 1 (500 aa).

Positions 1–25 are disordered; it reads MPVLLPSTDRDQDSRVGAPEWHQAA. Phosphoserine is present on Ser14. Positions 198–229 form a coiled coil; it reads MLVWEREELKSMKRKMEKDMERSEALLKALAS. Residues 265–286 are disordered; the sequence is VDITRPPTPRTQGLKTPPPDPV. At Tyr372 the chain carries Phosphotyrosine. The stretch at 422–448 forms a coiled coil; it reads LTRHNLQMEKNLKELRTTHDNLAWSLN.

In terms of assembly, microtubule inner protein component of sperm flagellar doublet microtubules.

The protein localises to the cytoplasm. The protein resides in the cytoskeleton. It is found in the flagellum axoneme. In terms of biological role, microtubule inner protein (MIP) part of the dynein-decorated doublet microtubules (DMTs) in sperm flagellar axoneme, which is required for motile flagellum beating. Forms an extensive interaction network cross-linking the lumen of axonemal doublet microtubules. The protein is Tektin-like protein 1 of Rattus norvegicus (Rat).